We begin with the raw amino-acid sequence, 149 residues long: Large ribosomal subunit protein uL15 (149 aa).

Positions 1–57 (MRLNDPKPKTGSQHRRRRVGRGIAAGQGASCGFGMRGQKSRSGRPTRPGFEGGQNPL) are disordered. The segment covering 23-35 (IAAGQGASCGFGM) has biased composition (gly residues).

Belongs to the universal ribosomal protein uL15 family. In terms of assembly, part of the 50S ribosomal subunit.

Functionally, binds to the 23S rRNA. The polypeptide is Large ribosomal subunit protein uL15 (Acaryochloris marina (strain MBIC 11017)).